Reading from the N-terminus, the 520-residue chain is Amine oxidase [flavin-containing] B (520 aa).

Serine 2 is subject to N-acetylserine. Topologically, residues 2 to 489 are cytoplasmic; the sequence is SNKSDVIVVG…TFLERHLPSV (488 aa). Residues lysine 52 and lysine 248 each carry the N6-acetyllysine modification. S-8alpha-FAD cysteine is present on cysteine 397. A helical; Anchor for type IV membrane protein membrane pass occupies residues 490–516; it reads PGLLKLFGLTTILSATALGFLAHKRGL. The Mitochondrial intermembrane segment spans residues 517 to 520; sequence FVHF.

The protein belongs to the flavin monoamine oxidase family. In terms of assembly, monomer, homo- or heterodimer (containing two subunits of similar size). Each subunit contains a covalently bound flavin. Enzymatically active as monomer. FAD is required as a cofactor.

It is found in the mitochondrion outer membrane. The enzyme catalyses a secondary aliphatic amine + O2 + H2O = a primary amine + an aldehyde + H2O2. The catalysed reaction is (R)-adrenaline + O2 + H2O = (R)-3,4-dihydroxymandelaldehyde + methylamine + H2O2. It carries out the reaction a primary methyl amine + O2 + H2O = an aldehyde + H2O2 + NH4(+). It catalyses the reaction benzylamine + O2 + H2O = benzaldehyde + H2O2 + NH4(+). The enzyme catalyses dopamine + O2 + H2O = 3,4-dihydroxyphenylacetaldehyde + H2O2 + NH4(+). The catalysed reaction is tyramine + O2 + H2O = (4-hydroxyphenyl)acetaldehyde + H2O2 + NH4(+). It carries out the reaction (R)-noradrenaline + O2 + H2O = (R)-3,4-dihydroxymandelaldehyde + H2O2 + NH4(+). It catalyses the reaction 2-phenylethylamine + O2 + H2O = 2-phenylacetaldehyde + H2O2 + NH4(+). The enzyme catalyses N-acetylputrescine + O2 + H2O = 4-acetamidobutanal + H2O2 + NH4(+). Its function is as follows. Catalyzes the oxidative deamination of primary and some secondary amines such as neurotransmitters, and exogenous amines including the tertiary amine, neurotoxin 1-methyl-4-phenyl-1,2,3,6-tetrahydropyridine (MPTP), with concomitant reduction of oxygen to hydrogen peroxide and participates in the metabolism of neuroactive and vasoactive amines in the central nervous system and peripheral tissues. Preferentially degrades benzylamine and phenylethylamine. This chain is Amine oxidase [flavin-containing] B, found in Mus musculus (Mouse).